We begin with the raw amino-acid sequence, 515 residues long: Maturase K (515 aa).

The protein belongs to the intron maturase 2 family. MatK subfamily.

The protein resides in the plastid. Its subcellular location is the chloroplast. Its function is as follows. Usually encoded in the trnK tRNA gene intron. Probably assists in splicing its own and other chloroplast group II introns. The chain is Maturase K from Pinus patula (Mexican weeping pine).